The following is a 66-amino-acid chain: MFTLKKSLLLLFFLGTINLSLCEEERNAEEERRDNPDERDVEVEKRFLGGLIKIVPAMICAVTKKC.

An N-terminal signal peptide occupies residues 1 to 20 (MFTLKKSLLLLFFLGTINLS). Positions 21–44 (LCEEERNAEEERRDNPDERDVEVE) are cleaved as a propeptide — small acidic peptide. Cysteines 60 and 66 form a disulfide.

It belongs to the frog skin active peptide (FSAP) family. Brevinin subfamily. Expressed by the skin dorsal glands.

It is found in the secreted. In terms of biological role, potent microbicidal activity, active against S.aureus and E.coli. It also acts as a membrane-disruptive agent at higher concentrations. The polypeptide is Ranalexin (Aquarana catesbeiana (American bullfrog)).